Here is a 190-residue protein sequence, read N- to C-terminus: Protein LIGHT-DEPENDENT SHORT HYPOCOTYLS 1 (190 aa).

Over residues 1 to 26 the composition is skewed to polar residues; sequence MDLISHQPNKNPNSSTQLTPPSSSRY. 2 disordered regions span residues 1–28 and 145–190; these read MDLI…RYEN and GVSY…GATV. One can recognise an ALOG domain in the interval 25-152; sequence RYENQKRRDW…ARGVSYEKKR (128 aa). Positions 150–154 match the Nuclear localization signal motif; the sequence is KKRKR. The span at 158–179 shows a compositional bias: low complexity; that stretch reads QKPQTQPPLQLQQQQQQPQQGQ. The segment covering 180–190 has biased composition (polar residues); the sequence is SMMANYSGATV.

The protein belongs to the plant homeotic and developmental regulators ALOG protein family. Expressed in hypocotyls, shoot apices and lateral root primordia and, weakly, in vascular tissues.

The protein resides in the nucleus. Its function is as follows. Probable transcription regulator that acts as a developmental regulator by promoting cell growth in response to continuous red (cR), far-red (cFR) and blue (cB) light in a phytochrome-dependent manner, at least during seedling development. The chain is Protein LIGHT-DEPENDENT SHORT HYPOCOTYLS 1 (LSH1) from Arabidopsis thaliana (Mouse-ear cress).